A 301-amino-acid polypeptide reads, in one-letter code: MNTVFNGKDFANKYYLILKEFLKQHDLRDKIALKVVLANNEPASKLYVSIKNRVAKEIGLNVEVIKFSANSVQSDILEVIDRENKNLSTDGIIVQLPLLRHMDSNSILNSIVYSKDVDGLSFVNLGKMILGDKKGFIPCTALAVLKILLDEGIRTSGKTVVVVGRSPLVGKPISILLSSKPYDATVIVCHSKSIYLDVYLRQADIVISAVGKPKLIDKSMLCGEPYVIDIGISEIETDNGKILSGDTDFDNIKDCVKFITPVKGGIGPVTVLMLMFNTIKAHLINNNMFDILDRLEKLVEV.

NADP(+)-binding positions include 164–166 (GRS), Ser-191, and Ile-232.

This sequence belongs to the tetrahydrofolate dehydrogenase/cyclohydrolase family. As to quaternary structure, homodimer.

It carries out the reaction (6R)-5,10-methylene-5,6,7,8-tetrahydrofolate + NADP(+) = (6R)-5,10-methenyltetrahydrofolate + NADPH. It catalyses the reaction (6R)-5,10-methenyltetrahydrofolate + H2O = (6R)-10-formyltetrahydrofolate + H(+). It functions in the pathway one-carbon metabolism; tetrahydrofolate interconversion. Catalyzes the oxidation of 5,10-methylenetetrahydrofolate to 5,10-methenyltetrahydrofolate and then the hydrolysis of 5,10-methenyltetrahydrofolate to 10-formyltetrahydrofolate. The chain is Bifunctional protein FolD from Borrelia garinii subsp. bavariensis (strain ATCC BAA-2496 / DSM 23469 / PBi) (Borreliella bavariensis).